The sequence spans 310 residues: MRIVFAGTPEFAAEHLKALLDSPYEIVAVYTQPDRPAGRGQKLMPSAVKALAVAHDIPVYQPQTLRNPEAQAELAALKPDLMVVVAYGLILPQVVLDIPRLGCINSHASLLPRWRGAAPIQRAVEAGDAESGVTVMRMEAGLDTGPMLLKVVTPISAEDTGGTLHDRLAAMGPGAVVQAIAGLADGSLQGEVQDDTLATYAHKLNKDEARIDWNRPAVELERLIRAFNPWPVCHSTLDGESVKVLAANLSTGKGTPGEILSASKDGLVVACGDGALSLTRLQLPGGKALAFSDLFNSRREKFAGGKVLGQ.

109–112 (SLLP) contributes to the (6S)-5,6,7,8-tetrahydrofolate binding site.

Belongs to the Fmt family.

The enzyme catalyses L-methionyl-tRNA(fMet) + (6R)-10-formyltetrahydrofolate = N-formyl-L-methionyl-tRNA(fMet) + (6S)-5,6,7,8-tetrahydrofolate + H(+). In terms of biological role, attaches a formyl group to the free amino group of methionyl-tRNA(fMet). The formyl group appears to play a dual role in the initiator identity of N-formylmethionyl-tRNA by promoting its recognition by IF2 and preventing the misappropriation of this tRNA by the elongation apparatus. The chain is Methionyl-tRNA formyltransferase from Pseudomonas entomophila (strain L48).